Reading from the N-terminus, the 267-residue chain is Small ribosomal subunit protein uS2 (267 aa).

The segment at 224-267 (GRQGEDQVDEKTFEGQKSEAAEGDKKTADNSMEDIVNAVEGDNK) is disordered. A compositionally biased stretch (basic and acidic residues) spans 225-251 (RQGEDQVDEKTFEGQKSEAAEGDKKTA).

Belongs to the universal ribosomal protein uS2 family.

This is Small ribosomal subunit protein uS2 from Levilactobacillus brevis (strain ATCC 367 / BCRC 12310 / CIP 105137 / JCM 1170 / LMG 11437 / NCIMB 947 / NCTC 947) (Lactobacillus brevis).